A 132-amino-acid polypeptide reads, in one-letter code: ATP synthase epsilon chain (132 aa).

This sequence belongs to the ATPase epsilon chain family. F-type ATPases have 2 components, CF(1) - the catalytic core - and CF(0) - the membrane proton channel. CF(1) has five subunits: alpha(3), beta(3), gamma(1), delta(1), epsilon(1). CF(0) has three main subunits: a, b and c.

The protein resides in the cell inner membrane. In terms of biological role, produces ATP from ADP in the presence of a proton gradient across the membrane. This Anaeromyxobacter dehalogenans (strain 2CP-C) protein is ATP synthase epsilon chain.